Here is a 242-residue protein sequence, read N- to C-terminus: Segregation and condensation protein A (242 aa).

Belongs to the ScpA family. As to quaternary structure, component of a cohesin-like complex composed of ScpA, ScpB and the Smc homodimer, in which ScpA and ScpB bind to the head domain of Smc. The presence of the three proteins is required for the association of the complex with DNA.

It localises to the cytoplasm. Participates in chromosomal partition during cell division. May act via the formation of a condensin-like complex containing Smc and ScpB that pull DNA away from mid-cell into both cell halves. The protein is Segregation and condensation protein A of Streptococcus mitis.